We begin with the raw amino-acid sequence, 186 residues long: Ras-related protein rapA (186 aa).

G12–S19 contributes to the GTP binding site. Positions Y34–Y42 match the Effector region motif. GTP-binding positions include D59–T63 and N118–D121. At C183 the chain carries Cysteine methyl ester. C183 carries S-geranylgeranyl cysteine lipidation. Residues A184 to L186 constitute a propeptide, removed in mature form.

Belongs to the small GTPase superfamily. Ras family. As to quaternary structure, interacts with ralGDS (only when rapA is in its GTP-bound state). Interacts with the Rap guanine nucleotide exchange factor glfB.

The protein resides in the cell membrane. It carries out the reaction GTP + H2O = GDP + phosphate + H(+). In terms of biological role, g protein of the Ras family that positively regulates phagocytosis and negatively regulates macropinocytosis. May be involved in the activation of guanylyl cyclase during the response to hyperosmotic conditions. Overexpressing cells generate alterations in cell shape and contractile responses. Involved in chemotaxis via regulation of the balance of Ras and Rap signaling at the leading edge of chemotaxing cells. The sequence is that of Ras-related protein rapA (rapA) from Dictyostelium discoideum (Social amoeba).